The primary structure comprises 171 residues: Phosphopantetheine adenylyltransferase (171 aa).

A substrate-binding site is contributed by T10. ATP-binding positions include 10 to 11 (TF) and H18. Positions 42, 74, and 88 each coordinate substrate. ATP-binding positions include 89-91 (GLR), E99, and 124-130 (WACLSSK).

Belongs to the bacterial CoaD family. Homohexamer. It depends on Mg(2+) as a cofactor.

It is found in the cytoplasm. It catalyses the reaction (R)-4'-phosphopantetheine + ATP + H(+) = 3'-dephospho-CoA + diphosphate. Its pathway is cofactor biosynthesis; coenzyme A biosynthesis; CoA from (R)-pantothenate: step 4/5. Its function is as follows. Reversibly transfers an adenylyl group from ATP to 4'-phosphopantetheine, yielding dephospho-CoA (dPCoA) and pyrophosphate. In Blochmanniella pennsylvanica (strain BPEN), this protein is Phosphopantetheine adenylyltransferase.